Consider the following 362-residue polypeptide: Heme A synthase (362 aa).

The next 5 membrane-spanning stretches (helical) occupy residues 11–31 (AAIRIWLSIVAGLIALMVLVG), 102–122 (VIGMVYLLPFLWFLWRGAVSG), 128–148 (LWLIFGLGALQGAVGWWMVAS), 159–179 (VRLATHLSLALLIFASIVWTL), and 198–218 (AWALVGVTFVQLYLGALVAGL). Residue His-262 coordinates heme. 3 helical membrane passes run 264–286 (MTAYTLLALAAWHAFDVMRAGAG), 297–317 (LAAILVQAVLGIATLLMVVPI), and 318–338 (SLALLHQGTALIVLTFAVLQA). Residue His-323 participates in heme binding.

This sequence belongs to the COX15/CtaA family. Type 2 subfamily. As to quaternary structure, interacts with CtaB. Heme b is required as a cofactor.

It localises to the cell membrane. It carries out the reaction Fe(II)-heme o + 2 A + H2O = Fe(II)-heme a + 2 AH2. It participates in porphyrin-containing compound metabolism; heme A biosynthesis; heme A from heme O: step 1/1. Its function is as follows. Catalyzes the conversion of heme O to heme A by two successive hydroxylations of the methyl group at C8. The first hydroxylation forms heme I, the second hydroxylation results in an unstable dihydroxymethyl group, which spontaneously dehydrates, resulting in the formyl group of heme A. The chain is Heme A synthase from Bradyrhizobium sp. (strain ORS 278).